The sequence spans 274 residues: NAD kinase (274 aa).

The active-site Proton acceptor is Asp-50. NAD(+) is bound by residues 50 to 51, 126 to 127, Arg-152, Asp-154, 165 to 170, and Ala-189; these read DG, NE, and TAYNKS.

Belongs to the NAD kinase family. Requires a divalent metal cation as cofactor.

Its subcellular location is the cytoplasm. The enzyme catalyses NAD(+) + ATP = ADP + NADP(+) + H(+). In terms of biological role, involved in the regulation of the intracellular balance of NAD and NADP, and is a key enzyme in the biosynthesis of NADP. Catalyzes specifically the phosphorylation on 2'-hydroxyl of the adenosine moiety of NAD to yield NADP. The sequence is that of NAD kinase from Streptococcus gordonii (strain Challis / ATCC 35105 / BCRC 15272 / CH1 / DL1 / V288).